Here is a 387-residue protein sequence, read N- to C-terminus: 1-deoxy-D-xylulose 5-phosphate reductoisomerase (387 aa).

NADPH is bound by residues Thr10, Gly11, Ile13, Asn38, and Asn122. 1-deoxy-D-xylulose 5-phosphate is bound at residue Lys123. Glu124 serves as a coordination point for NADPH. Mn(2+) is bound at residue Asp148. The 1-deoxy-D-xylulose 5-phosphate site is built by Ser149, Glu150, Ser174, and His197. Residue Glu150 participates in Mn(2+) binding. Gly203 is an NADPH binding site. 1-deoxy-D-xylulose 5-phosphate contacts are provided by Ser210, Asn215, Lys216, and Glu219. Residue Glu219 coordinates Mn(2+).

Belongs to the DXR family. Mg(2+) serves as cofactor. Mn(2+) is required as a cofactor.

The enzyme catalyses 2-C-methyl-D-erythritol 4-phosphate + NADP(+) = 1-deoxy-D-xylulose 5-phosphate + NADPH + H(+). It participates in isoprenoid biosynthesis; isopentenyl diphosphate biosynthesis via DXP pathway; isopentenyl diphosphate from 1-deoxy-D-xylulose 5-phosphate: step 1/6. Functionally, catalyzes the NADPH-dependent rearrangement and reduction of 1-deoxy-D-xylulose-5-phosphate (DXP) to 2-C-methyl-D-erythritol 4-phosphate (MEP). This chain is 1-deoxy-D-xylulose 5-phosphate reductoisomerase, found in Ehrlichia canis (strain Jake).